We begin with the raw amino-acid sequence, 24 residues long: Probable caffeoyl-CoA O-methyltransferase (24 aa).

It belongs to the class I-like SAM-binding methyltransferase superfamily. Cation-dependent O-methyltransferase family. CCoAMT subfamily. It depends on a divalent metal cation as a cofactor.

It carries out the reaction (E)-caffeoyl-CoA + S-adenosyl-L-methionine = (E)-feruloyl-CoA + S-adenosyl-L-homocysteine + H(+). The protein operates within aromatic compound metabolism; phenylpropanoid biosynthesis. Methylates caffeoyl-CoA to feruloyl-CoA and 5-hydroxyferuloyl-CoA to sinapoyl-CoA. Plays a role in the synthesis of feruloylated polysaccharides. Involved in the reinforcement of the plant cell wall. Also involved in the responding to wounding or pathogen challenge by the increased formation of cell wall-bound ferulic acid polymers. The polypeptide is Probable caffeoyl-CoA O-methyltransferase (Pinus pinaster (Maritime pine)).